Reading from the N-terminus, the 191-residue chain is Insulin-like peptide INSL6 (191 aa).

The signal sequence occupies residues Met-1 to Glu-22. 3 disulfides stabilise this stretch: Cys-33-Cys-172, Cys-45-Cys-185, and Cys-171-Cys-176. Positions Phe-53–Gln-161 are cleaved as a propeptide — connecting peptide.

Belongs to the insulin family.

It localises to the secreted. In terms of biological role, may have a role in sperm development and fertilization. The sequence is that of Insulin-like peptide INSL6 (Insl6) from Mus musculus (Mouse).